A 147-amino-acid chain; its full sequence is MRLMGFDVGSRTVGIAVSDLFGWTAQGVEIIRINEDESEFGLDRVKELVAQHQVTGFVLGLPKNMNNSIGPRAVKAQEYGAMLTELFPEIPVDYIDERLTTVQAERMLVEQADTSRKKRKQVIDKLAAVMILQNYLDAKGPLTKQGY.

The protein belongs to the YqgF nuclease family.

It localises to the cytoplasm. Functionally, could be a nuclease involved in processing of the 5'-end of pre-16S rRNA. The polypeptide is Putative pre-16S rRNA nuclease (Latilactobacillus sakei subsp. sakei (strain 23K) (Lactobacillus sakei subsp. sakei)).